The primary structure comprises 354 residues: UDP-N-acetylglucosamine--N-acetylmuramyl-(pentapeptide) pyrophosphoryl-undecaprenol N-acetylglucosamine transferase 3 (354 aa).

UDP-N-acetyl-alpha-D-glucosamine is bound by residues T12–G14, R163, S193, and Q287.

The protein belongs to the glycosyltransferase 28 family. MurG subfamily.

It localises to the cell membrane. The enzyme catalyses di-trans,octa-cis-undecaprenyl diphospho-N-acetyl-alpha-D-muramoyl-L-alanyl-D-glutamyl-meso-2,6-diaminopimeloyl-D-alanyl-D-alanine + UDP-N-acetyl-alpha-D-glucosamine = di-trans,octa-cis-undecaprenyl diphospho-[N-acetyl-alpha-D-glucosaminyl-(1-&gt;4)]-N-acetyl-alpha-D-muramoyl-L-alanyl-D-glutamyl-meso-2,6-diaminopimeloyl-D-alanyl-D-alanine + UDP + H(+). The protein operates within cell wall biogenesis; peptidoglycan biosynthesis. Its function is as follows. Cell wall formation. Catalyzes the transfer of a GlcNAc subunit on undecaprenyl-pyrophosphoryl-MurNAc-pentapeptide (lipid intermediate I) to form undecaprenyl-pyrophosphoryl-MurNAc-(pentapeptide)GlcNAc (lipid intermediate II). In Bacillus cereus (strain ATCC 14579 / DSM 31 / CCUG 7414 / JCM 2152 / NBRC 15305 / NCIMB 9373 / NCTC 2599 / NRRL B-3711), this protein is UDP-N-acetylglucosamine--N-acetylmuramyl-(pentapeptide) pyrophosphoryl-undecaprenol N-acetylglucosamine transferase 3.